Consider the following 440-residue polypeptide: Glucoside xylosyltransferase 1 (440 aa).

The Cytoplasmic portion of the chain corresponds to 1–6; that stretch reads MRRYLR. Residues 7–29 form a helical; Signal-anchor for type II membrane protein membrane-spanning segment; that stretch reads VVVLCVACGFCSLLYAFSQLAVS. Over 30 to 440 the chain is Lumenal; that stretch reads LEEGTGGGGG…DRYARSPKEK (411 aa). 3 N-linked (GlcNAc...) asparagine glycosylation sites follow: Asn173, Asn237, and Asn278.

It belongs to the glycosyltransferase 8 family.

Its subcellular location is the membrane. The enzyme catalyses 3-O-(beta-D-glucosyl)-L-seryl-[EGF-like domain protein] + UDP-alpha-D-xylose = 3-O-[alpha-D-xylosyl-(1-&gt;3)-beta-D-glucosyl]-L-seryl-[EGF-like domain protein] + UDP + H(+). In terms of biological role, glycosyltransferase which elongates the O-linked glucose attached to EGF-like repeats in the extracellular domain of Notch proteins by catalyzing the addition of xylose. The polypeptide is Glucoside xylosyltransferase 1 (GXYLT1) (Homo sapiens (Human)).